The sequence spans 153 residues: SsrA-binding protein (153 aa).

Residues 129–153 (KREDMKKKDQSREMAQALREKSKSH) form a disordered region.

This sequence belongs to the SmpB family.

It localises to the cytoplasm. Its function is as follows. Required for rescue of stalled ribosomes mediated by trans-translation. Binds to transfer-messenger RNA (tmRNA), required for stable association of tmRNA with ribosomes. tmRNA and SmpB together mimic tRNA shape, replacing the anticodon stem-loop with SmpB. tmRNA is encoded by the ssrA gene; the 2 termini fold to resemble tRNA(Ala) and it encodes a 'tag peptide', a short internal open reading frame. During trans-translation Ala-aminoacylated tmRNA acts like a tRNA, entering the A-site of stalled ribosomes, displacing the stalled mRNA. The ribosome then switches to translate the ORF on the tmRNA; the nascent peptide is terminated with the 'tag peptide' encoded by the tmRNA and targeted for degradation. The ribosome is freed to recommence translation, which seems to be the essential function of trans-translation. This Geobacter sulfurreducens (strain ATCC 51573 / DSM 12127 / PCA) protein is SsrA-binding protein.